A 149-amino-acid polypeptide reads, in one-letter code: Protein GR6 (149 aa).

As to expression, expressed in fetus (aged from 7 to 8 weeks). Weakly expressed in lymphocytes.

The chain is Protein GR6 from Homo sapiens (Human).